The primary structure comprises 21 residues: FFPFVINELAKLPSLISLLKK.

At Lys-21 the chain carries Lysine amide.

In terms of tissue distribution, expressed by the skin glands.

Its subcellular location is the secreted. Antimicrobial peptide. The sequence is that of Brevinin-1OKb from Nidirana okinavana (Kampira Falls frog).